The primary structure comprises 106 residues: Large ribosomal subunit protein eL36 (106 aa).

Residues 75–93 (VRQEKVGHSQESKEEERGD) are compositionally biased toward basic and acidic residues. A disordered region spans residues 75-106 (VRQEKVGHSQESKEEERGDVQCSPPDEGWWWY).

It belongs to the eukaryotic ribosomal protein eL36 family.

The sequence is that of Large ribosomal subunit protein eL36 (RPL36) from Daucus carota (Wild carrot).